Reading from the N-terminus, the 340-residue chain is Spike protein P5 (340 aa).

The domain-1 stretch occupies residues 2–122 (ANQQIGGSTV…NFPIALGVWP (121 aa)). Residues 123-141 (SGIKGDKGDPGAPGPAGGT) enclose the Collagen-like domain. A domain-2 region spans residues 142–340 (VVVEDSGASF…IINITAAKIN (199 aa)).

Homotrimer.

Its subcellular location is the virion. In terms of biological role, in association with P31 and P2, forms the spike complexes located at the 5-fold vertices of the capsid. Essential for viral infectivity. In Enterobacteria phage PRD1 (Bacteriophage PRD1), this protein is Spike protein P5 (V).